Here is a 338-residue protein sequence, read N- to C-terminus: tRNA N6-adenosine threonylcarbamoyltransferase (338 aa).

Residues histidine 110 and histidine 114 each contribute to the Fe cation site. Residues 132–136, aspartate 165, glycine 178, and asparagine 274 each bind substrate; that span reads VLSGG. Aspartate 298 is a Fe cation binding site.

The protein belongs to the KAE1 / TsaD family. Requires Fe(2+) as cofactor.

Its subcellular location is the cytoplasm. It catalyses the reaction L-threonylcarbamoyladenylate + adenosine(37) in tRNA = N(6)-L-threonylcarbamoyladenosine(37) in tRNA + AMP + H(+). Required for the formation of a threonylcarbamoyl group on adenosine at position 37 (t(6)A37) in tRNAs that read codons beginning with adenine. Is involved in the transfer of the threonylcarbamoyl moiety of threonylcarbamoyl-AMP (TC-AMP) to the N6 group of A37, together with TsaE and TsaB. TsaD likely plays a direct catalytic role in this reaction. The chain is tRNA N6-adenosine threonylcarbamoyltransferase from Borrelia recurrentis (strain A1).